The sequence spans 624 residues: MKTQKKEVYNFQSETKKLLHLMIHSLYSNKEIFLRELISNSSDAIDKLRFESISSPELYENDSDVKIQISINKAQRTLIISDNGIGMTKEDTIENLGTIAKSGTKSFLQSLEQKQNKKNELIGEFGVGFYSSFIVSEKVSVRTRFAGLESNKGILWESSGEGEYNITNIVKKTRGTEITLFLKKEEEEFLETWRIKNIISKYSDHITIPIHIQDYDKKNKTYFWEQINKAKALWTLNKSSITEEEYKDFYKHLTNDQNDPLIWSHNHVEGNQEYISLLYIPEKAAWDIWNRDNKHGLKLYVKRVYIMDNSQAFLPNYLRFIKGLIDSSDLPLNISREILQDNSITEKLRKSLIKKSLSMLEKLAQKNNEKYQIFWNQFGLVLKEGPAEDHENLNKIANLLRFTSMKSNNSEQKMSLKEYISNMNEQQEKIYYITADSYSSANNSPHLELFKKNNIDVLLLSDRIDEWMMNYLSEFEGKKFQSISKEDISLNKLTKEKKIKNKDVSTEMIEFLKKVKNILGNQVKDVRLTHRLTETPCVLLSDSTEMTTQMAKLFSAAGQSVPELKYIFEINPDHILIKKICTINNENELHQWIKLLLDQALLAEKGNLENPHKFISRMNKLLIK.

The interval 1 to 336 is a; substrate-binding; it reads MKTQKKEVYN…SSDLPLNISR (336 aa). The interval 337-552 is b; sequence EILQDNSITE…STEMTTQMAK (216 aa). A c region spans residues 553 to 624; sequence LFSAAGQSVP…ISRMNKLLIK (72 aa).

The protein belongs to the heat shock protein 90 family. As to quaternary structure, homodimer.

It is found in the cytoplasm. In terms of biological role, molecular chaperone. Has ATPase activity. This Buchnera aphidicola subsp. Acyrthosiphon pisum (strain APS) (Acyrthosiphon pisum symbiotic bacterium) protein is Chaperone protein HtpG.